A 66-amino-acid chain; its full sequence is Stress-induced protein KIN1 (66 aa).

A compositionally biased stretch (polar residues) spans 1–13; sequence MSETNKNAFQAGQ. The interval 1–52 is disordered; sequence MSETNKNAFQAGQTAGKAEEKSNVLLDKAKDAAAGAGAGAQQAGKSVSDAAA. The span at 17-31 shows a compositional bias: basic and acidic residues; it reads KAEEKSNVLLDKAKD. Repeats lie at residues 31–35 and 49–53; these read DAAAG. Positions 32–45 are enriched in low complexity; sequence AAAGAGAGAQQAGK.

The polypeptide is Stress-induced protein KIN1 (KIN1) (Arabidopsis thaliana (Mouse-ear cress)).